Here is a 435-residue protein sequence, read N- to C-terminus: Eukaryotic peptide chain release factor subunit 1-3 (435 aa).

N-acetylalanine is present on Ala-2.

This sequence belongs to the eukaryotic release factor 1 family. Heterodimer of two subunits, one of which binds GTP.

The protein localises to the cytoplasm. Directs the termination of nascent peptide synthesis (translation) in response to the termination codons UAA, UAG and UGA. Modulates plant growth and development. This is Eukaryotic peptide chain release factor subunit 1-3 from Brassica oleracea var. botrytis (Cauliflower).